The sequence spans 511 residues: Kinesin-like protein 8 (511 aa).

One can recognise a Kinesin motor domain in the interval 5-356 (NVRVIVRVRP…LRYSEAARRI (352 aa)). 107-114 (GQKGTGKT) provides a ligand contact to ATP. Serine 278, serine 279, serine 284, and serine 456 each carry phosphoserine. Residues 373–489 (EGELDDILTT…KLVKSQLHDY (117 aa)) adopt a coiled-coil conformation.

Belongs to the TRAFAC class myosin-kinesin ATPase superfamily. Kinesin family.

It localises to the cytoplasm. It is found in the cytoskeleton. This Schizosaccharomyces pombe (strain 972 / ATCC 24843) (Fission yeast) protein is Kinesin-like protein 8 (klp8).